We begin with the raw amino-acid sequence, 422 residues long: 5'-deoxyadenosine deaminase (422 aa).

H57 and H59 together coordinate Zn(2+). Substrate-binding residues include E86 and H178. Residue H205 participates in Zn(2+) binding. E208 and D294 together coordinate substrate. D294 provides a ligand contact to Zn(2+).

The protein belongs to the metallo-dependent hydrolases superfamily. MTA/SAH deaminase family. As to quaternary structure, homotetramer. Requires Zn(2+) as cofactor.

It carries out the reaction 5'-deoxyadenosine + H2O + H(+) = 5'-deoxyinosine + NH4(+). It catalyses the reaction S-adenosyl-L-homocysteine + H2O + H(+) = S-inosyl-L-homocysteine + NH4(+). The enzyme catalyses S-methyl-5'-thioadenosine + H2O + H(+) = S-methyl-5'-thioinosine + NH4(+). The catalysed reaction is adenosine + H2O + H(+) = inosine + NH4(+). Its pathway is amino-acid biosynthesis; S-adenosyl-L-methionine biosynthesis. Catalyzes the deamination of three SAM-derived enzymatic products, namely 5'-deoxyadenosine, S-adenosyl-L-homocysteine, and 5'-methylthioadenosine, to produce the inosine analogs. Can also deaminate adenosine. The preferred substrate for this enzyme is 5'-deoxyadenosine, but all these substrates are efficiently deaminated. Likely functions in a S-adenosyl-L-methionine (SAM) recycling pathway from S-adenosyl-L-homocysteine (SAH) produced from SAM-dependent methylation reactions. May also be involved in the recycling of 5'-deoxyadenosine, whereupon the 5'-deoxyribose moiety of 5'-deoxyinosine is further metabolized to deoxyhexoses used for the biosynthesis of aromatic amino acids in methanogens. The polypeptide is 5'-deoxyadenosine deaminase (Methanococcus maripaludis (strain C6 / ATCC BAA-1332)).